The chain runs to 151 residues: Transcriptional regulator MraZ (151 aa).

SpoVT-AbrB domains follow at residues 5 to 52 (ANAI…PLDE) and 81 to 124 (AVDL…DEDA).

It belongs to the MraZ family. In terms of assembly, forms oligomers.

It is found in the cytoplasm. The protein localises to the nucleoid. In Pseudomonas fluorescens (strain ATCC BAA-477 / NRRL B-23932 / Pf-5), this protein is Transcriptional regulator MraZ.